Reading from the N-terminus, the 74-residue chain is DNA-directed RNA polymerase subunit omega (74 aa).

It belongs to the RNA polymerase subunit omega family. In terms of assembly, the RNAP catalytic core consists of 2 alpha, 1 beta/beta' and 1 omega subunit. When a sigma factor is associated with the core the holoenzyme is formed, which can initiate transcription.

The catalysed reaction is RNA(n) + a ribonucleoside 5'-triphosphate = RNA(n+1) + diphosphate. Its function is as follows. Promotes RNA polymerase assembly. Latches the N- and C-terminal regions of the beta' subunit thereby facilitating its interaction with the beta and alpha subunits. This Helicobacter hepaticus (strain ATCC 51449 / 3B1) protein is DNA-directed RNA polymerase subunit omega.